We begin with the raw amino-acid sequence, 483 residues long: Regulatory protein ViaA (483 aa).

Belongs to the ViaA family. Homodimer. Interacts with RavA.

It is found in the cytoplasm. Component of the RavA-ViaA chaperone complex, which may act on the membrane to optimize the function of some of the respiratory chains. ViaA stimulates the ATPase activity of RavA. The protein is Regulatory protein ViaA of Escherichia coli O17:K52:H18 (strain UMN026 / ExPEC).